Consider the following 325-residue polypeptide: Foldase protein PrsA (325 aa).

The signal sequence occupies residues 1–20 (MKLMNKIIVPVTASALLLGA). Cys-21 is lipidated: N-palmitoyl cysteine. Residue Cys-21 is the site of S-diacylglycerol cysteine attachment. Residues 139-245 (ENSKKTSHIL…YGYHIIKADK (107 aa)) form the PpiC domain. Disordered regions lie at residues 159-200 (EGLS…SAKK) and 303-325 (PDKI…NSGS).

This sequence belongs to the PrsA family.

It is found in the cell membrane. The enzyme catalyses [protein]-peptidylproline (omega=180) = [protein]-peptidylproline (omega=0). Plays a major role in protein secretion by helping the post-translocational extracellular folding of several secreted proteins. In Staphylococcus epidermidis (strain ATCC 35984 / DSM 28319 / BCRC 17069 / CCUG 31568 / BM 3577 / RP62A), this protein is Foldase protein PrsA.